The chain runs to 150 residues: Globin-5 (150 aa).

The 140-residue stretch at P11–Y150 folds into the Globin domain. Heme b is bound by residues H74 and H106.

The protein belongs to the globin family. As to quaternary structure, monomer at high oxygen tension and high pH and dimeric at low oxygen tension and lower pH.

This Petromyzon marinus (Sea lamprey) protein is Globin-5.